The chain runs to 457 residues: Asparagine--tRNA ligase (457 aa).

It belongs to the class-II aminoacyl-tRNA synthetase family. In terms of assembly, homodimer.

The protein localises to the cytoplasm. It catalyses the reaction tRNA(Asn) + L-asparagine + ATP = L-asparaginyl-tRNA(Asn) + AMP + diphosphate + H(+). This chain is Asparagine--tRNA ligase, found in Phytoplasma australiense.